The sequence spans 284 residues: Tropomyosin isoforms a/b/d/f (284 aa).

Positions 1 to 284 form a coiled coil; sequence MDAIKKKMQA…DSTFQELSGY (284 aa). Positions 40-78 are disordered; that stretch reads EEELRDTQKKMTQTGDDLDKAQEDLSAATSKLEEKEKTV.

It belongs to the tropomyosin family. In terms of tissue distribution, isoform a and isoform d are expressed in body wall muscles, vulva, anus muscles and male tail muscles. Located to the myofibrils of thin actin filaments.

The protein resides in the cytoplasm. It is found in the myofibril. It localises to the sarcomere. The protein localises to the i band. In terms of biological role, tropomyosin, in association with the troponin complex, plays a central role in the calcium dependent regulation of muscle contraction. Involved in muscle actin filament organization and muscle arm extension and morphology. Protects actin filaments from depolymerization by unc-60 in vitro. Also has a role in male mating behavior by regulating the copulatory spicules. Binds to F-actin. This chain is Tropomyosin isoforms a/b/d/f (lev-11), found in Caenorhabditis elegans.